Reading from the N-terminus, the 324-residue chain is Carbamate kinase (324 aa).

It belongs to the carbamate kinase family.

The protein localises to the cytoplasm. It catalyses the reaction hydrogencarbonate + NH4(+) + ATP = carbamoyl phosphate + ADP + H2O + H(+). It participates in amino-acid degradation; L-arginine degradation via ADI pathway. This chain is Carbamate kinase, found in Rhizobium meliloti (strain 1021) (Ensifer meliloti).